We begin with the raw amino-acid sequence, 103 residues long: Small ribosomal subunit protein bS18c (103 aa).

This sequence belongs to the bacterial ribosomal protein bS18 family. As to quaternary structure, part of the 30S ribosomal subunit.

The protein localises to the plastid. It is found in the chloroplast. The protein is Small ribosomal subunit protein bS18c of Buxus microphylla (Littleleaf boxwood).